A 346-amino-acid polypeptide reads, in one-letter code: Putative D-xylulose reductase (346 aa).

The Zn(2+) site is built by C39, H64, and E150.

Belongs to the zinc-containing alcohol dehydrogenase family. Zn(2+) serves as cofactor.

It catalyses the reaction xylitol + NAD(+) = D-xylulose + NADH + H(+). In Rhizobium meliloti (strain 1021) (Ensifer meliloti), this protein is Putative D-xylulose reductase.